A 312-amino-acid chain; its full sequence is Glyoxylate/hydroxypyruvate reductase A (312 aa).

Arg-227 is an active-site residue. Catalysis depends on His-275, which acts as the Proton donor.

Belongs to the D-isomer specific 2-hydroxyacid dehydrogenase family. GhrA subfamily.

It is found in the cytoplasm. It carries out the reaction glycolate + NADP(+) = glyoxylate + NADPH + H(+). It catalyses the reaction (R)-glycerate + NAD(+) = 3-hydroxypyruvate + NADH + H(+). The catalysed reaction is (R)-glycerate + NADP(+) = 3-hydroxypyruvate + NADPH + H(+). In terms of biological role, catalyzes the NADPH-dependent reduction of glyoxylate and hydroxypyruvate into glycolate and glycerate, respectively. The polypeptide is Glyoxylate/hydroxypyruvate reductase A (Escherichia fergusonii (strain ATCC 35469 / DSM 13698 / CCUG 18766 / IAM 14443 / JCM 21226 / LMG 7866 / NBRC 102419 / NCTC 12128 / CDC 0568-73)).